We begin with the raw amino-acid sequence, 85 residues long: Large ribosomal subunit protein bL31B (85 aa).

This sequence belongs to the bacterial ribosomal protein bL31 family. Type B subfamily. In terms of assembly, part of the 50S ribosomal subunit.

This chain is Large ribosomal subunit protein bL31B, found in Porphyromonas gingivalis (strain ATCC 33277 / DSM 20709 / CIP 103683 / JCM 12257 / NCTC 11834 / 2561).